Consider the following 681-residue polypeptide: DNA ligase (681 aa).

Residues 33–37 (DGQFD), 83–84 (SL), and Glu-113 each bind NAD(+). Lys-115 (N6-AMP-lysine intermediate) is an active-site residue. NAD(+) is bound by residues Arg-136, Glu-176, Lys-292, and Lys-316. Residues Cys-410, Cys-413, Cys-429, and Cys-435 each contribute to the Zn(2+) site. The region spanning 599–681 (SIPRNLEGLS…RALLADGPPA (83 aa)) is the BRCT domain.

It belongs to the NAD-dependent DNA ligase family. LigA subfamily. It depends on Mg(2+) as a cofactor. Mn(2+) is required as a cofactor.

It catalyses the reaction NAD(+) + (deoxyribonucleotide)n-3'-hydroxyl + 5'-phospho-(deoxyribonucleotide)m = (deoxyribonucleotide)n+m + AMP + beta-nicotinamide D-nucleotide.. Its function is as follows. DNA ligase that catalyzes the formation of phosphodiester linkages between 5'-phosphoryl and 3'-hydroxyl groups in double-stranded DNA using NAD as a coenzyme and as the energy source for the reaction. It is essential for DNA replication and repair of damaged DNA. This chain is DNA ligase, found in Mycobacteroides abscessus (strain ATCC 19977 / DSM 44196 / CCUG 20993 / CIP 104536 / JCM 13569 / NCTC 13031 / TMC 1543 / L948) (Mycobacterium abscessus).